The primary structure comprises 183 residues: MFTPVEAKKSNLITVGRITGVFGIKGWVKLKSFTDPQDNVLEYSPLLLKTKHGVKECEIAEYQFRPQGLVVRLKGVDDRNAAEALAPVDVAIDKSLLPELDDDDFYWHQLEGLRVVTIYEGNTQDLGVVSKVMATGANDVLEVKPDAQSIDDRDRLVPYVLDLYVKKVDLSAECITVDWDPEF.

Residues 102–183 form the PRC barrel domain; that stretch reads DDDFYWHQLE…CITVDWDPEF (82 aa).

The protein belongs to the RimM family. As to quaternary structure, binds ribosomal protein uS19.

It is found in the cytoplasm. An accessory protein needed during the final step in the assembly of 30S ribosomal subunit, possibly for assembly of the head region. Essential for efficient processing of 16S rRNA. May be needed both before and after RbfA during the maturation of 16S rRNA. It has affinity for free ribosomal 30S subunits but not for 70S ribosomes. The protein is Ribosome maturation factor RimM of Saccharophagus degradans (strain 2-40 / ATCC 43961 / DSM 17024).